Consider the following 577-residue polypeptide: AP-1-like transcription factor napA (577 aa).

The segment at 25–178 (ALSSNNPPSK…RAFRERKEKH (154 aa)) is disordered. The span at 26-64 (LSSNNPPSKQKQNVQKPELGTNPTNTPGQASTGSFNTSP) shows a compositional bias: polar residues. Composition is skewed to basic and acidic residues over residues 109–121 (SDDHEVGEKRKDS) and 133–144 (RESDDKSDDKTS). 2 consecutive short sequence motifs (bipartite nuclear localization signal) follow at residues 117–124 (KRKDSNSN) and 144–151 (SKKPGRKP). A bZIP domain is found at 154–217 (SEPTSKRKAQ…ERLQVELREY (64 aa)). A basic motif region spans residues 159-180 (KRKAQNRAAQRAFRERKEKHLK). Positions 182 to 189 (LEAKVEEL) are leucine-zipper. A disordered region spans residues 294–386 (QAANGRASSS…NQAKESHEGH (93 aa)). The span at 299–319 (RASSSASPKTVTSNNPATKSP) shows a compositional bias: polar residues. The span at 347-364 (TSDSPSSSSDSHQFLSSS) shows a compositional bias: low complexity. Polar residues predominate over residues 365 to 377 (GTSPEPSVQSPDN). Residues 525 to 558 (CTKIWDRLQSMEKFRNGEIDVDNLCSELRTKARC) form a c-CRD region. Residues 543-550 (IDVDNLCS) carry the Nuclear export signal motif.

This sequence belongs to the bZIP family. YAP subfamily. Oxidative stress induces conformational changes through oxidation of cysteine residues, masking the nuclear export signal, thus abolishing nuclear export by CRM1/exportin 1.

The protein localises to the nucleus. It localises to the cytoplasm. Transcription activator involved in oxidative stress response, specifically during hyphal growth. Regulates the transcription of genes encoding antioxidant enzymes and components of the cellular thiol-reducing pathways including the mycelium-specific catalase catB (but not the conidia-specific catalase catA), thioredoxin reductase trxB and thioredoxin thiO. Preferentially binds to promoters with the core binding site 5'-TTA[CG]TAA-3'. Activity of the transcription factor is controlled through oxidation of specific cysteine residues resulting in the alteration of its subcellular location. Activation by hydroperoxides induces nuclear accumulation and as a result NapA transcriptional activity. The sequence is that of AP-1-like transcription factor napA from Emericella nidulans (strain FGSC A4 / ATCC 38163 / CBS 112.46 / NRRL 194 / M139) (Aspergillus nidulans).